Consider the following 203-residue polypeptide: Recombination protein RecR (203 aa).

The segment at 58-73 (CDYCGNLDVVSICNIC) adopts a C4-type zinc-finger fold. Residues 81-177 (SIIAIVESVA…KISKLASGIP (97 aa)) enclose the Toprim domain.

The protein belongs to the RecR family.

Functionally, may play a role in DNA repair. It seems to be involved in an RecBC-independent recombinational process of DNA repair. It may act with RecF and RecO. This Orientia tsutsugamushi (strain Boryong) (Rickettsia tsutsugamushi) protein is Recombination protein RecR.